Here is a 396-residue protein sequence, read N- to C-terminus: Enoyl-[acyl-carrier-protein] reductase [NADH] (396 aa).

NAD(+) is bound by residues 48 to 53 (GASTGY), 74 to 75 (FE), 111 to 112 (DA), and 139 to 140 (LA). Residue Y225 participates in substrate binding. Y235 functions as the Proton donor in the catalytic mechanism. Residues K244 and 273–275 (VVT) each bind NAD(+).

Belongs to the TER reductase family. As to quaternary structure, monomer.

It carries out the reaction a 2,3-saturated acyl-[ACP] + NAD(+) = a (2E)-enoyl-[ACP] + NADH + H(+). Its pathway is lipid metabolism; fatty acid biosynthesis. In terms of biological role, involved in the final reduction of the elongation cycle of fatty acid synthesis (FAS II). Catalyzes the reduction of a carbon-carbon double bond in an enoyl moiety that is covalently linked to an acyl carrier protein (ACP). This chain is Enoyl-[acyl-carrier-protein] reductase [NADH], found in Teredinibacter turnerae (strain ATCC 39867 / T7901).